Consider the following 220-residue polypeptide: Chalcone--flavanone isomerase B (220 aa).

Thr50, Asn115, and Thr192 together coordinate substrate.

Belongs to the chalcone isomerase family.

The catalysed reaction is a chalcone = a flavanone.. Its pathway is secondary metabolite biosynthesis; flavonoid biosynthesis. Catalyzes the intramolecular cyclization of bicyclic chalcones into tricyclic (S)-flavanones. Responsible for the isomerization of 4,2',4',6'-tetrahydroxychalcone (also termed chalcone) into naringenin. The sequence is that of Chalcone--flavanone isomerase B (CHI2) from Petunia hybrida (Petunia).